We begin with the raw amino-acid sequence, 94 residues long: Integration host factor subunit beta (94 aa).

This sequence belongs to the bacterial histone-like protein family. In terms of assembly, heterodimer of an alpha and a beta chain.

In terms of biological role, this protein is one of the two subunits of integration host factor, a specific DNA-binding protein that functions in genetic recombination as well as in transcriptional and translational control. The sequence is that of Integration host factor subunit beta from Xanthobacter autotrophicus (strain ATCC BAA-1158 / Py2).